Here is a 424-residue protein sequence, read N- to C-terminus: Putative chloroquine resistance transporter (424 aa).

Residues 1-56 (MTVIKKGKNKKKNLKNDDRYKELDSLITNGSEIGDNSGRSCIKRFFKIIGNEMKNN) lie on the Cytoplasmic side of the membrane. The helical transmembrane segment at 57–77 (VYVYFLSILYLCVCVMNKVFA) threads the bilayer. Over 78–88 (KRTLNKMGNYS) the chain is Vacuolar. Asparagine 86 carries N-linked (GlcNAc...) asparagine glycosylation. A helical transmembrane segment spans residues 89 to 109 (FVTSETHNIICIVVFQLLYFI). At 110-125 (YRKTSTSGYKNESQKN) the chain is on the cytoplasmic side. The helical transmembrane segment at 126–146 (FGWQFFLISLLDASTVIISMI) threads the bilayer. Topologically, residues 147–156 (GLTRTTGNIQ) are vacuolar. The helical transmembrane segment at 157–177 (SFIMQLIIPVNMYFCFMFLGY) threads the bilayer. Residues 178-180 (RYH) lie on the Cytoplasmic side of the membrane. The helical transmembrane segment at 181–201 (LFNYLGAFIILITIAVVETFL) threads the bilayer. At 202–209 (SFETQSEN) the chain is on the vacuolar side. A helical membrane pass occupies residues 210–230 (SIIFNLIMISALIPLSFSNMT). The Cytoplasmic portion of the chain corresponds to 231 to 248 (REVVFKKHKINILRLNAM). Residues 249–269 (VVLFQFFTSLLVLPVYNIPFL) traverse the membrane as a helical segment. Residues 270 to 317 (KEIYMPFSEMSTNINNGLRCLFYGQNTVVENCGVGMVKMCDNCEGAWK) are Vacuolar-facing. 2 disulfides stabilise this stretch: cysteine 289–cysteine 312 and cysteine 301–cysteine 309. The chain crosses the membrane as a helical span at residues 318–338 (TFITFSFFNICDNLLACYIID). The Cytoplasmic segment spans residues 339 to 346 (KFSTMTYT). The chain crosses the membrane as a helical span at residues 347 to 367 (IVSCIQGPAITIAYYFKFLAG). Residues 368–377 (DAVRKPRILD) lie on the Vacuolar side of the membrane. The chain crosses the membrane as a helical span at residues 378-398 (FLTLFGYLFGTIIYRIGNIIL). The Cytoplasmic portion of the chain corresponds to 399 to 424 (EKKKMVKSQNSNDSEAELTCIETSTA).

Belongs to the CRT-like transporter family.

The protein localises to the vacuole membrane. Its function is as follows. Nutrient transporter. Involved in maintaining the osmotic homeostasis of the digestive vacuole. The protein is Putative chloroquine resistance transporter of Plasmodium yoelii yoelii.